We begin with the raw amino-acid sequence, 336 residues long: DNA-directed RNA polymerase subunit alpha (336 aa).

An alpha N-terminal domain (alpha-NTD) region spans residues 1 to 238 (MNDLDLNLVP…NLFLPFLQAE (238 aa)). The segment at 267–336 (AKKVTFQHIF…LQKRFGMRLQ (70 aa)) is alpha C-terminal domain (alpha-CTD).

The protein belongs to the RNA polymerase alpha chain family. In plastids the minimal PEP RNA polymerase catalytic core is composed of four subunits: alpha, beta, beta', and beta''. When a (nuclear-encoded) sigma factor is associated with the core the holoenzyme is formed, which can initiate transcription.

It localises to the plastid. It is found in the chloroplast. The enzyme catalyses RNA(n) + a ribonucleoside 5'-triphosphate = RNA(n+1) + diphosphate. Its function is as follows. DNA-dependent RNA polymerase catalyzes the transcription of DNA into RNA using the four ribonucleoside triphosphates as substrates. The polypeptide is DNA-directed RNA polymerase subunit alpha (Huperzia lucidula (Shining clubmoss)).